Reading from the N-terminus, the 147-residue chain is Ribosome maturation factor RimP (147 aa).

It belongs to the RimP family.

It is found in the cytoplasm. Functionally, required for maturation of 30S ribosomal subunits. The protein is Ribosome maturation factor RimP of Thermosipho melanesiensis (strain DSM 12029 / CIP 104789 / BI429).